A 379-amino-acid chain; its full sequence is Succinyl-diaminopimelate desuccinylase (379 aa).

Residue His-70 coordinates Zn(2+). Asp-72 is a catalytic residue. Residue Asp-103 participates in Zn(2+) binding. The active-site Proton acceptor is the Glu-137. Glu-138, Glu-166, and His-352 together coordinate Zn(2+).

The protein belongs to the peptidase M20A family. DapE subfamily. As to quaternary structure, homodimer. Requires Zn(2+) as cofactor. It depends on Co(2+) as a cofactor.

It catalyses the reaction N-succinyl-(2S,6S)-2,6-diaminopimelate + H2O = (2S,6S)-2,6-diaminopimelate + succinate. Its pathway is amino-acid biosynthesis; L-lysine biosynthesis via DAP pathway; LL-2,6-diaminopimelate from (S)-tetrahydrodipicolinate (succinylase route): step 3/3. Functionally, catalyzes the hydrolysis of N-succinyl-L,L-diaminopimelic acid (SDAP), forming succinate and LL-2,6-diaminopimelate (DAP), an intermediate involved in the bacterial biosynthesis of lysine and meso-diaminopimelic acid, an essential component of bacterial cell walls. This chain is Succinyl-diaminopimelate desuccinylase, found in Burkholderia cenocepacia (strain ATCC BAA-245 / DSM 16553 / LMG 16656 / NCTC 13227 / J2315 / CF5610) (Burkholderia cepacia (strain J2315)).